Consider the following 310-residue polypeptide: Putative S-adenosyl-L-methionine-dependent methyltransferase MMAR_0356 (310 aa).

Residues D137 and 166-167 (DL) each bind S-adenosyl-L-methionine.

The protein belongs to the UPF0677 family.

Functionally, exhibits S-adenosyl-L-methionine-dependent methyltransferase activity. The sequence is that of Putative S-adenosyl-L-methionine-dependent methyltransferase MMAR_0356 from Mycobacterium marinum (strain ATCC BAA-535 / M).